Here is a 234-residue protein sequence, read N- to C-terminus: Adenosine 5'-phosphosulfate reductase (234 aa).

The [4Fe-4S] cluster site is built by cysteine 120, cysteine 121, cysteine 203, and cysteine 206. Catalysis depends on cysteine 229, which acts as the Nucleophile; cysteine thiosulfonate intermediate.

It belongs to the PAPS reductase family. CysH subfamily. It depends on [4Fe-4S] cluster as a cofactor.

It is found in the cytoplasm. The catalysed reaction is [thioredoxin]-disulfide + sulfite + AMP + 2 H(+) = adenosine 5'-phosphosulfate + [thioredoxin]-dithiol. The protein operates within sulfur metabolism; hydrogen sulfide biosynthesis; sulfite from sulfate. Its function is as follows. Catalyzes the formation of sulfite from adenosine 5'-phosphosulfate (APS) using thioredoxin as an electron donor. In Bacillus thuringiensis subsp. konkukian (strain 97-27), this protein is Adenosine 5'-phosphosulfate reductase.